The primary structure comprises 72 residues: Aurein-2.3 (72 aa).

Positions 1–22 (MAFLKKSLFLVLFLGLVSLSIC) are cleaved as a signal peptide. Residues 23 to 49 (EKEKRQNGEDEDENEAANHEEGSEEKR) constitute a propeptide that is removed on maturation. The tract at residues 27-47 (RQNGEDEDENEAANHEEGSEE) is disordered. The span at 38-47 (AANHEEGSEE) shows a compositional bias: basic and acidic residues. At L65 the chain carries Leucine amide. A propeptide spanning residues 69–72 (NDVE) is cleaved from the precursor.

Amidation is essential for antibacterial activity against Gram-positive bacteria. As to expression, expressed by the skin dorsal glands.

It is found in the secreted. The protein localises to the target cell membrane. In terms of biological role, amphipathic alpha-helical antimicrobial peptide with weak to moderate activity against Gram-positive bacteria, and no activity against Gram-negative bacteria. Probably acts by disturbing membrane functions with its amphipathic structure. Strongly inhibits the formation of NO by neuronal nitric oxide synthase (nNOS) at micromolar concentrations. Acts by a non-competitive mechanism, probably by binding to calcium/calmodulin and as a consequence blocking calmodulin attachment to nNOS. This Ranoidea aurea (Green and golden bell frog) protein is Aurein-2.3.